Here is a 37-residue protein sequence, read N- to C-terminus: Large ribosomal subunit protein bL36A (37 aa).

Belongs to the bacterial ribosomal protein bL36 family.

In Clavibacter sepedonicus (Clavibacter michiganensis subsp. sepedonicus), this protein is Large ribosomal subunit protein bL36A.